Here is a 156-residue protein sequence, read N- to C-terminus: Myosin regulatory light chain B, smooth adductor muscle (156 aa).

At Ala-1 the chain carries Blocked amino end (Ala). EF-hand domains follow at residues 15–50 and 84–119; these read KQIQEMKEAFTMIDQNRDGFIDINDLKEMFSSLGRT and DTEETLRNAFAMFDELDTKKLNIEYIKDLLENMGDN. Positions 28, 30, 32, and 39 each coordinate Ca(2+).

Its function is as follows. In molluscan muscle, calcium regulation is associated with myosin rather than with actin. Muscle myosin contains two types of light chains: the catalytic light chain, essential for ATPase activity, and the regulatory light chain, a calcium-binding protein responsible for Ca(2+) dependent binding and Ca(2+) dependent Mg-ATPase activity. This chain is Myosin regulatory light chain B, smooth adductor muscle, found in Mizuhopecten yessoensis (Japanese scallop).